The sequence spans 246 residues: Proteasome subunit alpha type-5 (246 aa).

It belongs to the peptidase T1A family. In terms of assembly, the 26S proteasome consists of a 20S proteasome core and two 19S regulatory subunits. The 20S proteasome core is composed of 28 subunits that are arranged in four stacked rings, resulting in a barrel-shaped structure. The two end rings are each formed by seven alpha subunits, and the two central rings are each formed by seven beta subunits. The catalytic chamber with the active sites is on the inside of the barrel.

The protein localises to the cytoplasm. The protein resides in the nucleus. Functionally, the proteasome is a multicatalytic proteinase complex which is characterized by its ability to cleave peptides with Arg, Phe, Tyr, Leu, and Glu adjacent to the leaving group at neutral or slightly basic pH. The proteasome has an ATP-dependent proteolytic activity. The polypeptide is Proteasome subunit alpha type-5 (Trypanosoma brucei brucei).